We begin with the raw amino-acid sequence, 225 residues long: MKFNSISPNKQHHTGFTTSNNENLNQQLNQVLILLQTLQSQAKKIASFQNQTYEWNLKHHQNLKNVLKSFNRLNSIIDSKGSNNELNEKDNNEFENGVTFHQKIINTYDPLDPFSEELENLIMQIDRGLFHQLRDDSLEIIYPFILKWLKENNSLVLSLVLIWESSTKFHYLLNKKKFKEINKKILDCIVDYENKGIISTLINQNEFPFSDDEYNNLKKFLNDYS.

The span at 1-19 (MKFNSISPNKQHHTGFTTS) shows a compositional bias: polar residues. The tract at residues 1-21 (MKFNSISPNKQHHTGFTTSNN) is disordered.

This is an uncharacterized protein from Dictyostelium discoideum (Social amoeba).